The sequence spans 263 residues: tRNA (guanine-N(1)-)-methyltransferase (263 aa).

S-adenosyl-L-methionine contacts are provided by residues G124 and 144 to 149; that span reads LGDFVL.

It belongs to the RNA methyltransferase TrmD family. Homodimer.

The protein localises to the cytoplasm. The enzyme catalyses guanosine(37) in tRNA + S-adenosyl-L-methionine = N(1)-methylguanosine(37) in tRNA + S-adenosyl-L-homocysteine + H(+). Specifically methylates guanosine-37 in various tRNAs. The polypeptide is tRNA (guanine-N(1)-)-methyltransferase (Aromatoleum aromaticum (strain DSM 19018 / LMG 30748 / EbN1) (Azoarcus sp. (strain EbN1))).